A 245-amino-acid chain; its full sequence is tRNA (guanine-N(1)-)-methyltransferase (245 aa).

Residues glycine 111 and 131 to 136 each bind S-adenosyl-L-methionine; that span reads MGDYVL.

The protein belongs to the RNA methyltransferase TrmD family. In terms of assembly, homodimer.

It is found in the cytoplasm. It carries out the reaction guanosine(37) in tRNA + S-adenosyl-L-methionine = N(1)-methylguanosine(37) in tRNA + S-adenosyl-L-homocysteine + H(+). Functionally, specifically methylates guanosine-37 in various tRNAs. This Staphylococcus aureus (strain Mu3 / ATCC 700698) protein is tRNA (guanine-N(1)-)-methyltransferase.